Reading from the N-terminus, the 31-residue chain is Bacteriocin lactocin-705 (31 aa).

In terms of biological role, antibacterial activity against several lactic acid bacteria, Listeria, Streptococci, etc. The protein is Bacteriocin lactocin-705 of Lacticaseibacillus paracasei (Lactobacillus paracasei).